We begin with the raw amino-acid sequence, 198 residues long: Proteasome subunit beta type-2 (198 aa).

It belongs to the peptidase T1B family. The 26S proteasome consists of a 20S proteasome core and two 19S regulatory subunits. The 20S proteasome core is composed of 28 subunits that are arranged in four stacked rings, resulting in a barrel-shaped structure. The two end rings are each formed by seven alpha subunits, and the two central rings are each formed by seven beta subunits. The catalytic chamber with the active sites is on the inside of the barrel.

The protein localises to the cytoplasm. Its subcellular location is the nucleus. Its function is as follows. Non-catalytic component of the proteasome, a multicatalytic proteinase complex which is characterized by its ability to cleave peptides with Arg, Phe, Tyr, Leu, and Glu adjacent to the leaving group at neutral or slightly basic pH. The proteasome has an ATP-dependent proteolytic activity. The protein is Proteasome subunit beta type-2 (psmB2) of Dictyostelium discoideum (Social amoeba).